The following is a 307-amino-acid chain: Ribonuclease Z (307 aa).

Zn(2+) is bound by residues H61, H63, D65, H66, H138, D207, and H265. D65 acts as the Proton acceptor in catalysis.

This sequence belongs to the RNase Z family. In terms of assembly, homodimer. Zn(2+) serves as cofactor.

It carries out the reaction Endonucleolytic cleavage of RNA, removing extra 3' nucleotides from tRNA precursor, generating 3' termini of tRNAs. A 3'-hydroxy group is left at the tRNA terminus and a 5'-phosphoryl group is left at the trailer molecule.. Its function is as follows. Zinc phosphodiesterase, which displays some tRNA 3'-processing endonuclease activity. Probably involved in tRNA maturation, by removing a 3'-trailer from precursor tRNA. The sequence is that of Ribonuclease Z from Methanothermobacter thermautotrophicus (strain ATCC 29096 / DSM 1053 / JCM 10044 / NBRC 100330 / Delta H) (Methanobacterium thermoautotrophicum).